The chain runs to 319 residues: 4-hydroxy-3-methylbut-2-enyl diphosphate reductase (319 aa).

Cysteine 17 is a [4Fe-4S] cluster binding site. Positions 46 and 79 each coordinate (2E)-4-hydroxy-3-methylbut-2-enyl diphosphate. 2 residues coordinate dimethylallyl diphosphate: histidine 46 and histidine 79. Residues histidine 46 and histidine 79 each coordinate isopentenyl diphosphate. Residue cysteine 101 participates in [4Fe-4S] cluster binding. Residue histidine 129 participates in (2E)-4-hydroxy-3-methylbut-2-enyl diphosphate binding. Position 129 (histidine 129) interacts with dimethylallyl diphosphate. Isopentenyl diphosphate is bound at residue histidine 129. The active-site Proton donor is the glutamate 131. Residue threonine 170 participates in (2E)-4-hydroxy-3-methylbut-2-enyl diphosphate binding. Cysteine 200 contributes to the [4Fe-4S] cluster binding site. Residues serine 228, serine 229, asparagine 230, and serine 273 each contribute to the (2E)-4-hydroxy-3-methylbut-2-enyl diphosphate site. 4 residues coordinate dimethylallyl diphosphate: serine 228, serine 229, asparagine 230, and serine 273. 4 residues coordinate isopentenyl diphosphate: serine 228, serine 229, asparagine 230, and serine 273.

The protein belongs to the IspH family. Requires [4Fe-4S] cluster as cofactor.

It catalyses the reaction isopentenyl diphosphate + 2 oxidized [2Fe-2S]-[ferredoxin] + H2O = (2E)-4-hydroxy-3-methylbut-2-enyl diphosphate + 2 reduced [2Fe-2S]-[ferredoxin] + 2 H(+). It carries out the reaction dimethylallyl diphosphate + 2 oxidized [2Fe-2S]-[ferredoxin] + H2O = (2E)-4-hydroxy-3-methylbut-2-enyl diphosphate + 2 reduced [2Fe-2S]-[ferredoxin] + 2 H(+). Its pathway is isoprenoid biosynthesis; dimethylallyl diphosphate biosynthesis; dimethylallyl diphosphate from (2E)-4-hydroxy-3-methylbutenyl diphosphate: step 1/1. It functions in the pathway isoprenoid biosynthesis; isopentenyl diphosphate biosynthesis via DXP pathway; isopentenyl diphosphate from 1-deoxy-D-xylulose 5-phosphate: step 6/6. Its function is as follows. Catalyzes the conversion of 1-hydroxy-2-methyl-2-(E)-butenyl 4-diphosphate (HMBPP) into a mixture of isopentenyl diphosphate (IPP) and dimethylallyl diphosphate (DMAPP). Acts in the terminal step of the DOXP/MEP pathway for isoprenoid precursor biosynthesis. This is 4-hydroxy-3-methylbut-2-enyl diphosphate reductase from Cereibacter sphaeroides (strain ATCC 17029 / ATH 2.4.9) (Rhodobacter sphaeroides).